The primary structure comprises 205 residues: MKYTGSIFKRSRRLGFSLLENNKEFSKGKKRKSIPGQHGNRFRSSTLSGYAQQLQEKQRMQYMYGITDKQFRRLFRFVLKQKGNLTVNLFRVLESRLDNIVYRMGFAPTRKSARQMVNHGHVILNDQTVDTPSIIINPGDKVRLKARITKSPLVKNFIENSVISSFVETNKKAFEGTYIRFPERSELPAGINESYVVEWYKRLVK.

In terms of domain architecture, S4 RNA-binding spans 95 to 158; sequence SRLDNIVYRM…TKSPLVKNFI (64 aa).

This sequence belongs to the universal ribosomal protein uS4 family. As to quaternary structure, part of the 30S ribosomal subunit. Contacts protein S5. The interaction surface between S4 and S5 is involved in control of translational fidelity.

Its function is as follows. One of the primary rRNA binding proteins, it binds directly to 16S rRNA where it nucleates assembly of the body of the 30S subunit. Functionally, with S5 and S12 plays an important role in translational accuracy. The chain is Small ribosomal subunit protein uS4 from Mycoplasma genitalium (strain ATCC 33530 / DSM 19775 / NCTC 10195 / G37) (Mycoplasmoides genitalium).